We begin with the raw amino-acid sequence, 380 residues long: Lipid-A-disaccharide synthase (380 aa).

The protein belongs to the LpxB family.

It carries out the reaction a lipid X + a UDP-2-N,3-O-bis[(3R)-3-hydroxyacyl]-alpha-D-glucosamine = a lipid A disaccharide + UDP + H(+). It functions in the pathway bacterial outer membrane biogenesis; LPS lipid A biosynthesis. Its function is as follows. Condensation of UDP-2,3-diacylglucosamine and 2,3-diacylglucosamine-1-phosphate to form lipid A disaccharide, a precursor of lipid A, a phosphorylated glycolipid that anchors the lipopolysaccharide to the outer membrane of the cell. The sequence is that of Lipid-A-disaccharide synthase from Pseudomonas syringae pv. tomato (strain ATCC BAA-871 / DC3000).